We begin with the raw amino-acid sequence, 472 residues long: Lactate utilization protein B (472 aa).

4Fe-4S ferredoxin-type domains are found at residues 304–334 and 353–382; these read GTEFQPVLQCIRCAACVNVCPVYRHIGGHSY and YDDYKELPYASTLCAACTEACPVKIPLHEL. [4Fe-4S] cluster-binding residues include cysteine 313, cysteine 316, cysteine 319, cysteine 323, cysteine 366, cysteine 369, and cysteine 373.

Belongs to the LutB/YkgF family.

In terms of biological role, is involved in L-lactate degradation and allows cells to grow with lactate as the sole carbon source. Has probably a role as an electron transporter during oxidation of L-lactate. The chain is Lactate utilization protein B from Anoxybacillus flavithermus (strain DSM 21510 / WK1).